Reading from the N-terminus, the 399-residue chain is F-box protein At1g10110 (399 aa).

The region spanning 9 to 56 (PNWSELVTDILSLVFKHLSFTDFARAKTVCSSWYFASKSSSPRKNHTP) is the F-box domain.

In Arabidopsis thaliana (Mouse-ear cress), this protein is F-box protein At1g10110.